The following is a 269-amino-acid chain: Phosphate import ATP-binding protein PstB 2 (269 aa).

The ABC transporter domain maps to 23–264 (LEVKDLSIYY…PKKQKTEDYI (242 aa)). 55–62 (GPSGCGKS) provides a ligand contact to ATP.

This sequence belongs to the ABC transporter superfamily. Phosphate importer (TC 3.A.1.7) family. In terms of assembly, the complex is composed of two ATP-binding proteins (PstB), two transmembrane proteins (PstC and PstA) and a solute-binding protein (PstS).

The protein localises to the cell membrane. The catalysed reaction is phosphate(out) + ATP + H2O = ADP + 2 phosphate(in) + H(+). Part of the ABC transporter complex PstSACB involved in phosphate import. Responsible for energy coupling to the transport system. This chain is Phosphate import ATP-binding protein PstB 2, found in Bacillus subtilis (strain 168).